A 203-amino-acid chain; its full sequence is Imidazoleglycerol-phosphate dehydratase (203 aa).

The protein belongs to the imidazoleglycerol-phosphate dehydratase family.

Its subcellular location is the cytoplasm. It catalyses the reaction D-erythro-1-(imidazol-4-yl)glycerol 3-phosphate = 3-(imidazol-4-yl)-2-oxopropyl phosphate + H2O. It functions in the pathway amino-acid biosynthesis; L-histidine biosynthesis; L-histidine from 5-phospho-alpha-D-ribose 1-diphosphate: step 6/9. The sequence is that of Imidazoleglycerol-phosphate dehydratase from Parvibaculum lavamentivorans (strain DS-1 / DSM 13023 / NCIMB 13966).